The following is a 287-amino-acid chain: Large ribosomal subunit protein uL2 (287 aa).

Positions 221–287 are disordered; it reads RGSVMNPCDH…SKRSRGGRDS (67 aa). Residues 258–287 are compositionally biased toward basic residues; it reads KTRKRNKPSNRFVLRKRRRTSKRSRGGRDS.

The protein belongs to the universal ribosomal protein uL2 family. Part of the 50S ribosomal subunit. Forms a bridge to the 30S subunit in the 70S ribosome.

One of the primary rRNA binding proteins. Required for association of the 30S and 50S subunits to form the 70S ribosome, for tRNA binding and peptide bond formation. It has been suggested to have peptidyltransferase activity; this is somewhat controversial. Makes several contacts with the 16S rRNA in the 70S ribosome. The sequence is that of Large ribosomal subunit protein uL2 from Prochlorococcus marinus (strain MIT 9313).